A 121-amino-acid polypeptide reads, in one-letter code: Large ribosomal subunit protein uL18 (121 aa).

This sequence belongs to the universal ribosomal protein uL18 family. In terms of assembly, part of the 50S ribosomal subunit; part of the 5S rRNA/L5/L18/L25 subcomplex. Contacts the 5S and 23S rRNAs.

This is one of the proteins that bind and probably mediate the attachment of the 5S RNA into the large ribosomal subunit, where it forms part of the central protuberance. This Ureaplasma urealyticum serovar 10 (strain ATCC 33699 / Western) protein is Large ribosomal subunit protein uL18.